Consider the following 107-residue polypeptide: Ribonuclease P protein component 4 (107 aa).

Positions 66, 69, 92, and 95 each coordinate Zn(2+).

This sequence belongs to the eukaryotic/archaeal RNase P protein component 4 family. As to quaternary structure, consists of a catalytic RNA component and at least 4-5 protein subunits. It depends on Zn(2+) as a cofactor.

Its subcellular location is the cytoplasm. The catalysed reaction is Endonucleolytic cleavage of RNA, removing 5'-extranucleotides from tRNA precursor.. Part of ribonuclease P, a protein complex that generates mature tRNA molecules by cleaving their 5'-ends. This Methanosarcina mazei (strain ATCC BAA-159 / DSM 3647 / Goe1 / Go1 / JCM 11833 / OCM 88) (Methanosarcina frisia) protein is Ribonuclease P protein component 4.